We begin with the raw amino-acid sequence, 101 residues long: DNA-binding protein Fis (101 aa).

Residues 77 to 96 (QTRAANMLGINRGTLRKKLK) constitute a DNA-binding region (H-T-H motif).

This sequence belongs to the transcriptional regulatory Fis family. Homodimer.

Functionally, activates ribosomal RNA transcription. Plays a direct role in upstream activation of rRNA promoters. This Shewanella denitrificans (strain OS217 / ATCC BAA-1090 / DSM 15013) protein is DNA-binding protein Fis.